A 251-amino-acid polypeptide reads, in one-letter code: Hydroxyacylglutathione hydrolase (251 aa).

His53, His55, Asp57, His58, His110, Asp127, and His165 together coordinate Zn(2+).

This sequence belongs to the metallo-beta-lactamase superfamily. Glyoxalase II family. In terms of assembly, monomer. The cofactor is Zn(2+).

It carries out the reaction an S-(2-hydroxyacyl)glutathione + H2O = a 2-hydroxy carboxylate + glutathione + H(+). The protein operates within secondary metabolite metabolism; methylglyoxal degradation; (R)-lactate from methylglyoxal: step 2/2. Its function is as follows. Thiolesterase that catalyzes the hydrolysis of S-D-lactoyl-glutathione to form glutathione and D-lactic acid. The sequence is that of Hydroxyacylglutathione hydrolase from Yersinia pestis (strain Pestoides F).